We begin with the raw amino-acid sequence, 138 residues long: Basic phospholipase A2 homolog CTs-K49a (138 aa).

The N-terminal stretch at 1–16 (MRTLWIMAVLLVVVEG) is a signal peptide. Cystine bridges form between cysteine 42/cysteine 131, cysteine 44/cysteine 60, cysteine 59/cysteine 111, cysteine 65/cysteine 138, cysteine 66/cysteine 104, and cysteine 91/cysteine 102. The segment at 121–133 (KKKKINLKLFCKK) is important for membrane-damaging activities in eukaryotes and bacteria; heparin-binding.

It belongs to the phospholipase A2 family. Group II subfamily. K49 sub-subfamily. Expressed by the venom gland.

The protein resides in the secreted. In terms of biological role, snake venom phospholipase A2 homolog that lacks catalytic activity. It shows myotoxic and weak anticoagulant activities. A model of myotoxic mechanism has been proposed: an apo Lys49-PLA2 is activated by the entrance of a hydrophobic molecule (e.g. fatty acid) at the hydrophobic channel of the protein leading to a reorientation of a monomer. This reorientation causes a transition between 'inactive' to 'active' states, causing alignment of C-terminal and membrane-docking sites (MDoS) side-by-side and putting the membrane-disruption sites (MDiS) in the same plane, exposed to solvent and in a symmetric position for both monomers. The MDoS region stabilizes the toxin on membrane by the interaction of charged residues with phospholipid head groups. Subsequently, the MDiS region destabilizes the membrane with penetration of hydrophobic residues. This insertion causes a disorganization of the membrane, allowing an uncontrolled influx of ions (i.e. calcium and sodium), and eventually triggering irreversible intracellular alterations and cell death. The protein is Basic phospholipase A2 homolog CTs-K49a of Trimeresurus stejnegeri (Chinese green tree viper).